A 180-amino-acid chain; its full sequence is Cell division protein ZapC (180 aa).

This sequence belongs to the ZapC family. In terms of assembly, interacts directly with FtsZ.

Its subcellular location is the cytoplasm. Contributes to the efficiency of the cell division process by stabilizing the polymeric form of the cell division protein FtsZ. Acts by promoting interactions between FtsZ protofilaments and suppressing the GTPase activity of FtsZ. The chain is Cell division protein ZapC from Vibrio cholerae serotype O1 (strain ATCC 39315 / El Tor Inaba N16961).